A 644-amino-acid polypeptide reads, in one-letter code: MIDAACNYLNPYAQQHQAQQQQHAQHQQHAQQQQHHLHMQQAQHHLHLSHQQAQQQHMQHLTQQQQQQQQQQQQQQQQQQQQQQPQQQQHDFLSAAALLSAPPSLSGSSSGSSSGSSPLYGKPPMKLELPYPQASSTGTASPNSSIQSAPSSASVSPSIFPSPAQSFASISASPSTPTTTLAPPTTAAAGALAGSPTSSSPSSSAASAAAAAAAAAAAAADLGAAAVASAAYGWNTAYSGLGPARSQFPYAQYASDYYGNAVGMSSSAAWFSHQERLYQPWSSQSYPGFNFDDIAFQTQLQRRSVRCTCPNCTNEMSGLPPIVGPDERGRKQHICHIPGCERLYGKASHLKTHLRWHTGERPFLCLTCGKRFSRSDELQRHGRTHTNYRPYACPICSKKFSRSDHLSKHKKTHFKDKKSKKVLAAEAKEQAAAAIKLEKKEKKSGKPLTPPVEFKQEQPDTTPLVNYAPYANLYQHSTSAGSSVNPPPPPPPLFQQQMTTTTSSAAASFVEQPWSSSSSRAIQPATTSASSSSSSSASSPAAAVVSAIGSASSPAASATALAQHHYAALAMQSESQLAAEYGLTMSGLASGASQDSSSSCHMKSEYAASYPADFGAGTASYGYPHPHPHHHNAWAAAYHPHATA.

Disordered regions lie at residues histidine 16–glutamine 65 and alanine 101–proline 196. Composition is skewed to low complexity over residues alanine 101–leucine 119 and alanine 140–proline 196. C2H2-type zinc fingers lie at residues histidine 333–histidine 357, phenylalanine 363–histidine 385, and tyrosine 391–histidine 413. 2 disordered regions span residues leucine 437–threonine 461 and threonine 478–alanine 537. 2 stretches are compositionally biased toward low complexity: residues threonine 499 to serine 508 and alanine 521 to alanine 537.

The protein localises to the nucleus. In terms of biological role, required for the development of the antennal, intercalary and mandibular segments of the head. In Drosophila melanogaster (Fruit fly), this protein is Transcription factor btd (btd).